We begin with the raw amino-acid sequence, 498 residues long: Probable cytosol aminopeptidase (498 aa).

Mn(2+) is bound by residues Lys-264 and Asp-269. Lys-276 is a catalytic residue. Mn(2+)-binding residues include Asp-287, Asp-346, and Glu-348. The active site involves Arg-350.

This sequence belongs to the peptidase M17 family. It depends on Mn(2+) as a cofactor.

It localises to the cytoplasm. The catalysed reaction is Release of an N-terminal amino acid, Xaa-|-Yaa-, in which Xaa is preferably Leu, but may be other amino acids including Pro although not Arg or Lys, and Yaa may be Pro. Amino acid amides and methyl esters are also readily hydrolyzed, but rates on arylamides are exceedingly low.. It catalyses the reaction Release of an N-terminal amino acid, preferentially leucine, but not glutamic or aspartic acids.. Functionally, presumably involved in the processing and regular turnover of intracellular proteins. Catalyzes the removal of unsubstituted N-terminal amino acids from various peptides. The chain is Probable cytosol aminopeptidase from Brucella anthropi (strain ATCC 49188 / DSM 6882 / CCUG 24695 / JCM 21032 / LMG 3331 / NBRC 15819 / NCTC 12168 / Alc 37) (Ochrobactrum anthropi).